Reading from the N-terminus, the 1243-residue chain is Membrane-associated phosphatidylinositol transfer protein 1 (1243 aa).

3 positions are modified to phosphothreonine: threonine 59, threonine 282, and threonine 287. A disordered region spans residues 259-330; it reads CNTGSEGPEA…HGGGVSPQSL (72 aa). Residues 271–283 are compositionally biased toward polar residues; sequence PGKSSTEARPGTS. Over residues 299–319 the composition is skewed to low complexity; the sequence is ASPDASFGKQWSSSSRSSYSS. Serine 300, serine 304, serine 319, serine 326, serine 329, serine 342, serine 345, serine 346, and serine 373 each carry phosphoserine. Serine 382 carries the post-translational modification Phosphoserine; by CDK1. Low complexity predominate over residues 581 to 593; the sequence is AGPGSRGSSRRGS. Residues 581–679 are disordered; that stretch reads AGPGSRGSSR…PASSEAPDGP (99 aa). Serine 593, serine 600, and serine 621 each carry phosphoserine. Residues 643-658 show a composition bias toward polar residues; it reads GSQNSLQVASTATSSG. The DDHD domain maps to 684–878; it reads RLDFKVSGFF…VVAFILRQVI (195 aa). Serine 895 bears the Phosphoserine mark. The tract at residues 1206 to 1243 is disordered; it reads LLRSRGPSQVDREGPGTPPTTLARGKTRSISLKLDSEE. An omega-N-methylarginine mark is found at arginine 1210 and arginine 1217. A Phosphoserine modification is found at serine 1236.

It belongs to the PtdIns transfer protein family. PI transfer class IIA subfamily. As to quaternary structure, interacts with PTK2B via its C-terminus. Interacts with RHOA. Has higher affinity for the inactive, GDP-bound form of RHOA. The CDK1-phosphorylated form interacts with PLK1. Interacts with VAPB and PIK4CA. Phosphorylated on multiple sites by CDK1 at the onset of mitosis. Phosphorylation facilitates dissociation from the Golgi complex and is required for interaction with PLK1. In terms of processing, phosphorylated on threonine residues upon treatment with oleic acid. Post-translationally, phosphorylated on tyrosine residues by PTK2B. As to expression, detected at high levels in brain, and at lower levels in lung, kidney, spleen and liver (at protein level). Ubiquitous. Highly expressed in embryonic retina and the central nervous system.

It localises to the cytoplasm. It is found in the golgi apparatus. The protein localises to the golgi stack membrane. Its subcellular location is the endoplasmic reticulum membrane. The protein resides in the lipid droplet. It localises to the cleavage furrow. It is found in the midbody. It carries out the reaction a 1,2-diacyl-sn-glycero-3-phospho-(1D-myo-inositol)(in) = a 1,2-diacyl-sn-glycero-3-phospho-(1D-myo-inositol)(out). In terms of biological role, catalyzes the transfer of phosphatidylinositol (PI) between membranes. Binds PI. Also binds phosphatidylcholine (PC) and phosphatidic acid (PA) with the binding affinity order of PI &gt; PA &gt; PC. Regulates RHOA activity, and plays a role in cytoskeleton remodeling. Necessary for normal completion of cytokinesis. Plays a role in maintaining normal diacylglycerol levels in the Golgi apparatus. Necessary for maintaining the normal structure of the endoplasmic reticulum and the Golgi apparatus. Required for protein export from the endoplasmic reticulum and the Golgi. Binds calcium ions. The polypeptide is Membrane-associated phosphatidylinositol transfer protein 1 (Pitpnm1) (Mus musculus (Mouse)).